The chain runs to 610 residues: F-box/LRR-repeat protein 4 (610 aa).

One can recognise an F-box domain in the interval 5-52; the sequence is DRINNCLPEELILEIFRRLESKPNRDACSLVCKRWLSLERFSRTTLRI. LRR repeat units follow at residues 53 to 79, 124 to 149, 150 to 175, 178 to 200, 201 to 227, 228 to 253, 256 to 277, 278 to 303, 304 to 329, 330 to 355, 356 to 381, 382 to 407, 408 to 433, 434 to 459, 460 to 484, 485 to 510, 511 to 536, 537 to 562, and 563 to 588; these read GASF…HVDE, SSSL…SLIW, CPNV…DLQG, VGDQ…NLRF, CEGL…GVAA, SAKI…YLDS, IHDK…LKLQ, CVSV…ALYS, FQHF…TLSD, CYFV…EING, CHNI…ALLY, CQRI…HLVD, CSGI…HIRR, CYEI…SLRF, CDKV…NVSG, CNQI…DISV, LQNI…VLSH, CHHI…HMVY, and CPGI…LIEK. Residues 88-125 are disordered; the sequence is LSPSPKRKRGRDSSSPSSSKRKKLTDKTHSGAENVESS.

This is F-box/LRR-repeat protein 4 (FBL4) from Arabidopsis thaliana (Mouse-ear cress).